A 77-amino-acid chain; its full sequence is UPF0291 protein BLi02035/BL02933 (77 aa).

Residues 57–77 (PEGNDVTPEKLKQEKRNRRLH) are disordered.

It belongs to the UPF0291 family.

It is found in the cytoplasm. The sequence is that of UPF0291 protein BLi02035/BL02933 from Bacillus licheniformis (strain ATCC 14580 / DSM 13 / JCM 2505 / CCUG 7422 / NBRC 12200 / NCIMB 9375 / NCTC 10341 / NRRL NRS-1264 / Gibson 46).